The following is a 380-amino-acid chain: O-phospho-L-seryl-tRNA:Cys-tRNA synthase (380 aa).

Residues 86 to 87 (AR), asparagine 192, and 215 to 217 (SGH) contribute to the pyridoxal 5'-phosphate site. At lysine 218 the chain carries N6-(pyridoxal phosphate)lysine.

Belongs to the SepCysS family. As to quaternary structure, homodimer. Interacts with SepRS. Requires pyridoxal 5'-phosphate as cofactor.

The enzyme catalyses O-phospho-L-seryl-tRNA(Cys) + hydrogen sulfide + H(+) = L-cysteinyl-tRNA(Cys) + phosphate. Functionally, converts O-phospho-L-seryl-tRNA(Cys) (Sep-tRNA(Cys)) to L-cysteinyl-tRNA(Cys) (Cys-tRNA(Cys)). This chain is O-phospho-L-seryl-tRNA:Cys-tRNA synthase, found in Methanococcus maripaludis (strain DSM 14266 / JCM 13030 / NBRC 101832 / S2 / LL).